The chain runs to 355 residues: Peptide chain release factor 1 (355 aa).

An N5-methylglutamine modification is found at Gln233. The span at 280–293 shows a compositional bias: basic and acidic residues; the sequence is ERRKKEQERADSRR. Residues 280 to 306 are disordered; sequence ERRKKEQERADSRRGQVGSGNRSERIR.

Belongs to the prokaryotic/mitochondrial release factor family. In terms of processing, methylated by PrmC. Methylation increases the termination efficiency of RF1.

It localises to the cytoplasm. Functionally, peptide chain release factor 1 directs the termination of translation in response to the peptide chain termination codons UAG and UAA. This is Peptide chain release factor 1 from Rickettsia africae (strain ESF-5).